Consider the following 274-residue polypeptide: Large ribosomal subunit protein uL2cz/uL2cy (274 aa).

2 disordered regions span residues 1–21 (MAIHLYKTSTPGTRNGAVDSQ) and 225–274 (PVDH…RRSK).

It belongs to the universal ribosomal protein uL2 family. Part of the 50S ribosomal subunit.

It is found in the plastid. The protein resides in the chloroplast. The chain is Large ribosomal subunit protein uL2cz/uL2cy (rpl2-A) from Gossypium barbadense (Sea Island cotton).